The primary structure comprises 63 residues: Arabinogalactan protein 22 (63 aa).

A signal peptide spans 1–27; sequence MASLKFPLEILAVFVIISVILLPIAQS. P32, P34, and P36 each carry 4-hydroxyproline. O-linked (Ara...) hydroxyproline glycosylation is found at P32, P34, and P36. The GPI-anchor amidated serine moiety is linked to residue S38. A propeptide spans 39–63 (removed in mature form); that stretch reads DGTSIDQGIAYVLMMVALALTYFIH.

This sequence belongs to the AG-peptide AGP family. In terms of processing, contains 4-hydroxyproline; hydroxylated on Pro-32, Pro-34 and Pro-36. O-glycosylated on hydroxyprolines; noncontiguous hydroxylproline residues are glycosylated with arabinogalactan.

The protein localises to the cell membrane. Functionally, proteoglycan that seems to be implicated in diverse developmental roles such as differentiation, cell-cell recognition, embryogenesis and programmed cell death. This is Arabinogalactan protein 22 from Arabidopsis thaliana (Mouse-ear cress).